The sequence spans 1030 residues: Beta-galactosidase (1030 aa).

2 residues coordinate substrate: Asn-99 and Asp-197. Asp-197 is a Na(+) binding site. Mg(2+) contacts are provided by Glu-411, His-413, and Glu-456. Residues Glu-456 and 532–535 each bind substrate; that span reads EYAH. Catalysis depends on Glu-456, which acts as the Proton donor. The active-site Nucleophile is the Glu-532. Asn-592 contributes to the Mg(2+) binding site. Phe-596 and Asn-599 together coordinate Na(+). Positions 599 and 1004 each coordinate substrate.

This sequence belongs to the glycosyl hydrolase 2 family. As to quaternary structure, homotetramer. The cofactor is Mg(2+). It depends on Na(+) as a cofactor.

It carries out the reaction Hydrolysis of terminal non-reducing beta-D-galactose residues in beta-D-galactosides.. The sequence is that of Beta-galactosidase from Photobacterium profundum (strain SS9).